A 339-amino-acid polypeptide reads, in one-letter code: Holliday junction branch migration complex subunit RuvB (339 aa).

The interval 1 to 180 (MTRTITPDMT…FGVISRLEFY (180 aa)) is large ATPase domain (RuvB-L). ATP contacts are provided by residues leucine 19, arginine 20, glycine 61, lysine 64, threonine 65, threonine 66, 127-129 (EDF), arginine 170, tyrosine 180, and arginine 217. Threonine 65 contributes to the Mg(2+) binding site. The segment at 181–251 (TIEELAFIIT…VVQDALALLE (71 aa)) is small ATPAse domain (RuvB-S). The segment at 254–339 (HMGFDYMDRM…EPPQGKLFQD (86 aa)) is head domain (RuvB-H). Positions 309 and 314 each coordinate DNA.

The protein belongs to the RuvB family. In terms of assembly, homohexamer. Forms an RuvA(8)-RuvB(12)-Holliday junction (HJ) complex. HJ DNA is sandwiched between 2 RuvA tetramers; dsDNA enters through RuvA and exits via RuvB. An RuvB hexamer assembles on each DNA strand where it exits the tetramer. Each RuvB hexamer is contacted by two RuvA subunits (via domain III) on 2 adjacent RuvB subunits; this complex drives branch migration. In the full resolvosome a probable DNA-RuvA(4)-RuvB(12)-RuvC(2) complex forms which resolves the HJ.

The protein localises to the cytoplasm. The enzyme catalyses ATP + H2O = ADP + phosphate + H(+). Its function is as follows. The RuvA-RuvB-RuvC complex processes Holliday junction (HJ) DNA during genetic recombination and DNA repair, while the RuvA-RuvB complex plays an important role in the rescue of blocked DNA replication forks via replication fork reversal (RFR). RuvA specifically binds to HJ cruciform DNA, conferring on it an open structure. The RuvB hexamer acts as an ATP-dependent pump, pulling dsDNA into and through the RuvAB complex. RuvB forms 2 homohexamers on either side of HJ DNA bound by 1 or 2 RuvA tetramers; 4 subunits per hexamer contact DNA at a time. Coordinated motions by a converter formed by DNA-disengaged RuvB subunits stimulates ATP hydrolysis and nucleotide exchange. Immobilization of the converter enables RuvB to convert the ATP-contained energy into a lever motion, pulling 2 nucleotides of DNA out of the RuvA tetramer per ATP hydrolyzed, thus driving DNA branch migration. The RuvB motors rotate together with the DNA substrate, which together with the progressing nucleotide cycle form the mechanistic basis for DNA recombination by continuous HJ branch migration. Branch migration allows RuvC to scan DNA until it finds its consensus sequence, where it cleaves and resolves cruciform DNA. This chain is Holliday junction branch migration complex subunit RuvB, found in Geotalea daltonii (strain DSM 22248 / JCM 15807 / FRC-32) (Geobacter daltonii).